A 219-amino-acid chain; its full sequence is Uracil-DNA glycosylase (219 aa).

Asp-59 acts as the Proton acceptor in catalysis.

This sequence belongs to the uracil-DNA glycosylase (UDG) superfamily. UNG family.

It is found in the cytoplasm. It catalyses the reaction Hydrolyzes single-stranded DNA or mismatched double-stranded DNA and polynucleotides, releasing free uracil.. Functionally, excises uracil residues from the DNA which can arise as a result of misincorporation of dUMP residues by DNA polymerase or due to deamination of cytosine. In Staphylococcus haemolyticus (strain JCSC1435), this protein is Uracil-DNA glycosylase.